The sequence spans 408 residues: Acetylornithine aminotransferase (408 aa).

Pyridoxal 5'-phosphate contacts are provided by residues glycine 107–threonine 108 and phenylalanine 141. Arginine 144 is a N(2)-acetyl-L-ornithine binding site. Aspartate 227–glutamine 230 contacts pyridoxal 5'-phosphate. Lysine 256 is modified (N6-(pyridoxal phosphate)lysine). Residue threonine 284 participates in N(2)-acetyl-L-ornithine binding. Threonine 285 contributes to the pyridoxal 5'-phosphate binding site.

The protein belongs to the class-III pyridoxal-phosphate-dependent aminotransferase family. ArgD subfamily. Homodimer. Pyridoxal 5'-phosphate is required as a cofactor.

It is found in the cytoplasm. It catalyses the reaction N(2)-acetyl-L-ornithine + 2-oxoglutarate = N-acetyl-L-glutamate 5-semialdehyde + L-glutamate. It participates in amino-acid biosynthesis; L-arginine biosynthesis; N(2)-acetyl-L-ornithine from L-glutamate: step 4/4. The chain is Acetylornithine aminotransferase from Xanthomonas axonopodis pv. citri (strain 306).